The primary structure comprises 491 residues: uncharacterized protein (491 aa).

A run of 12 helical transmembrane segments spans residues 48-68 (LILVSAFALLGPMASSMVAPC), 85-105 (ALILSIYLLVFAISPMISAPL), 112-132 (RMLLQVGNVIFIVFNMACGLA), 140-160 (IFRFLAGFGSATPMGLGSGTI), 174-194 (AVMSLAPLLGPTIGPVVSGFI), 202-222 (WIFWSTTIFSGFIFALSLPLL), 277-297 (PIVILCSTYMAIQYGILYLVL), 317-337 (LNYIASGIGLIFGSQASGIFI), 358-378 (VPVILLGTFFFPAGLFIYGWT), 383-403 (THWIGPDIGAAMFNIGLMLGW), 408-428 (TYLIDSFMIYAASSTAVACCV), and 455-475 (LLAFIVLGSSIITCSLLWFGG).

It belongs to the major facilitator superfamily.

The protein localises to the membrane. This is an uncharacterized protein from Schizosaccharomyces pombe (strain 972 / ATCC 24843) (Fission yeast).